The primary structure comprises 490 residues: Aspartyl/glutamyl-tRNA(Asn/Gln) amidotransferase subunit B (490 aa).

It belongs to the GatB/GatE family. GatB subfamily. Heterotrimer of A, B and C subunits.

It catalyses the reaction L-glutamyl-tRNA(Gln) + L-glutamine + ATP + H2O = L-glutaminyl-tRNA(Gln) + L-glutamate + ADP + phosphate + H(+). The catalysed reaction is L-aspartyl-tRNA(Asn) + L-glutamine + ATP + H2O = L-asparaginyl-tRNA(Asn) + L-glutamate + ADP + phosphate + 2 H(+). Functionally, allows the formation of correctly charged Asn-tRNA(Asn) or Gln-tRNA(Gln) through the transamidation of misacylated Asp-tRNA(Asn) or Glu-tRNA(Gln) in organisms which lack either or both of asparaginyl-tRNA or glutaminyl-tRNA synthetases. The reaction takes place in the presence of glutamine and ATP through an activated phospho-Asp-tRNA(Asn) or phospho-Glu-tRNA(Gln). This chain is Aspartyl/glutamyl-tRNA(Asn/Gln) amidotransferase subunit B, found in Prochlorococcus marinus subsp. pastoris (strain CCMP1986 / NIES-2087 / MED4).